The following is a 1106-amino-acid chain: DNA polymerase delta catalytic subunit (1106 aa).

A disordered region spans residues 1–28; it reads MDGKRRPGPGPGVPPKRARGGLWDEDEA. Positions 4–19 match the Nuclear localization signal motif; sequence KRRPGPGPGVPPKRAR. R19 is modified (omega-N-methylarginine). Residue K573 forms a Glycyl lysine isopeptide (Lys-Gly) (interchain with G-Cter in SUMO2) linkage. Zn(2+)-binding residues include C1011, C1014, C1025, and C1028. The CysA-type zinc-finger motif lies at 1011 to 1028; that stretch reads CIGCRTVLSHQGAVCKFC. [4Fe-4S] cluster-binding residues include C1057, C1060, C1070, and C1075. Positions 1057–1075 match the CysB motif motif; it reads CQRCQGSLHEDVICTSRDC.

Belongs to the DNA polymerase type-B family. In terms of assembly, component of the tetrameric DNA polymerase delta complex (Pol-delta4), which consists of POLD1/p125, POLD2/p50, POLD3/p66/p68 and POLD4/p12, with POLD1 bearing both DNA polymerase and 3' to 5' proofreading exonuclease activities. Within Pol-delta4, directly interacts with POLD2 and POLD4. Following genotoxic stress by DNA-damaging agents, such as ultraviolet light and methyl methanesulfonate, or by replication stress induced by treatment with hydroxyurea or aphidicolin, Pol-delta4 is converted into a trimeric form of the complex (Pol-delta3) by POLD4 degradation. Pol-delta3 is the major form at S phase replication sites and DNA damage sites. POLD1 displays different catalytic properties depending upon the complex it is found in. It exhibits higher proofreading activity and fidelity than Pol-delta4, making it particularly well suited to respond to DNA damage. Directly interacts with PCNA, as do POLD3 and POLD4; this interaction stimulates Pol-delta4 polymerase activity. As POLD2 and POLD4, directly interacts with WRNIP1; this interaction stimulates DNA polymerase delta-mediated DNA synthesis, independently of the presence of PCNA. This stimulation may be due predominantly to an increase of initiation frequency and also to increased processivity. Also observed as a dimeric complex with POLD2 (Pol-delta2). Pol-delta2 is relatively insensitive to the PCNA stimulation (2-5-fold) compared to Pol-delta4 that is stimulated by over 50-fold. Interacts with POLDIP2; this interaction is indirect and most probably mediated through POLD2-binding. Interacts with CIAO1. Interacts with POLDIP2. Interacts with RFC1. It depends on [4Fe-4S] cluster as a cofactor.

It localises to the nucleus. The catalysed reaction is DNA(n) + a 2'-deoxyribonucleoside 5'-triphosphate = DNA(n+1) + diphosphate. Regulated by alteration of quaternary structure. Exhibits burst rates of DNA synthesis are about 5 times faster in the presence of POLD4 (Pol-delta4 complex) than in its absence (Pol-delta3 complex), while the affinity of the enzyme for its DNA and dNTP substrates appears unchanged. The Pol-delta3 complex is more likely to proofread DNA synthesis because it cleaves single-stranded DNA twice as fast and transfers mismatched DNA from the polymerase to the exonuclease sites 9 times faster compared to the Pol-delta3 complex. Pol-delta3 also extends mismatched primers 3 times more slowly in the absence of POLD4. The conversion of Pol-delta4 into Pol-delta3 is induced by genotoxic stress or by replication stress leading POLD4 degradation. Stimulated in the presence of PCNA. This stimulation is further increased in the presence of KCTD13/PDIP1, most probably via direct interaction between KCTD13 and POLD2. Functionally, as the catalytic component of the trimeric (Pol-delta3 complex) and tetrameric DNA polymerase delta complexes (Pol-delta4 complex), plays a crucial role in high fidelity genome replication, including in lagging strand synthesis, and repair. Exhibits both DNA polymerase and 3'- to 5'-exonuclease activities. Requires the presence of accessory proteins POLD2, POLD3 and POLD4 for full activity. Depending upon the absence (Pol-delta3) or the presence of POLD4 (Pol-delta4), displays differences in catalytic activity. Most notably, expresses higher proofreading activity in the context of Pol-delta3 compared with that of Pol-delta4. Although both Pol-delta3 and Pol-delta4 process Okazaki fragments in vitro, Pol-delta3 may be better suited to fulfill this task, exhibiting near-absence of strand displacement activity compared to Pol-delta4 and stalling on encounter with the 5'-blocking oligonucleotides. Pol-delta3 idling process may avoid the formation of a gap, while maintaining a nick that can be readily ligated. Along with DNA polymerase kappa, DNA polymerase delta carries out approximately half of nucleotide excision repair (NER) synthesis following UV irradiation. Under conditions of DNA replication stress, in the presence of POLD3 and POLD4, may catalyze the repair of broken replication forks through break-induced replication (BIR). Involved in the translesion synthesis (TLS) of templates carrying O6-methylguanine, 8oxoG or abasic sites. In Bos taurus (Bovine), this protein is DNA polymerase delta catalytic subunit (POLD1).